The primary structure comprises 396 residues: L-lactate dehydrogenase (396 aa).

The FMN hydroxy acid dehydrogenase domain occupies 1 to 380; that stretch reads MIISAASDYR…TQDSLVQGLG (380 aa). Tyrosine 24 lines the substrate pocket. The FMN site is built by serine 106 and glutamine 127. Tyrosine 129 contributes to the substrate binding site. An FMN-binding site is contributed by threonine 155. Substrate is bound at residue arginine 164. FMN is bound at residue lysine 251. Histidine 275 (proton acceptor) is an active-site residue. Arginine 278 provides a ligand contact to substrate. 306–330 is an FMN binding site; the sequence is DSGIRNGLDVVRMIALGADTVLLGR.

This sequence belongs to the FMN-dependent alpha-hydroxy acid dehydrogenase family. FMN is required as a cofactor.

The protein resides in the cell inner membrane. It carries out the reaction (S)-lactate + A = pyruvate + AH2. Its function is as follows. Catalyzes the conversion of L-lactate to pyruvate. Is coupled to the respiratory chain. The polypeptide is L-lactate dehydrogenase (Escherichia coli O7:K1 (strain IAI39 / ExPEC)).